We begin with the raw amino-acid sequence, 128 residues long: Fluoride-specific ion channel FluC (128 aa).

4 helical membrane passes run 5–25, 35–55, 67–87, and 96–116; these read IVAI…LSIG, LGTL…VVAF, LFVI…SVEV, and FGWA…LTGL. Gly-75 and Thr-78 together coordinate Na(+).

The protein belongs to the fluoride channel Fluc/FEX (TC 1.A.43) family.

The protein localises to the cell inner membrane. The enzyme catalyses fluoride(in) = fluoride(out). With respect to regulation, na(+) is not transported, but it plays an essential structural role and its presence is essential for fluoride channel function. Its function is as follows. Fluoride-specific ion channel. Important for reducing fluoride concentration in the cell, thus reducing its toxicity. This Burkholderia pseudomallei (strain 1106a) protein is Fluoride-specific ion channel FluC.